Reading from the N-terminus, the 81-residue chain is Protein Vpu (81 aa).

At 1-6 the chain is on the extracellular side; that stretch reads MQPIQI. A helical membrane pass occupies residues 7-27; the sequence is AIVALVVAIIIAIVVWSIVII. The Cytoplasmic portion of the chain corresponds to 28–81; the sequence is EYRKILRQRKIDRLIDRLIERAEDSGNESEGEISALAEMGVEMGHHAPWDVDDL. Phosphoserine; by host CK2 occurs at positions 52 and 56.

It belongs to the HIV-1 VPU protein family. Homopentamer. Interacts with host CD4 and BRTC; these interactions induce proteasomal degradation of CD4. Interacts with host BST2; this interaction leads to the degradation of host BST2. Interacts with host FBXW11. Interacts with host AP1M1; this interaction plays a role in the mistrafficking and subsequent degradation of host BST2. Interacts with host RANBP2; this interaction allows Vpu to down-regulate host BLM sumoylation. Phosphorylated by host CK2. This phosphorylation is necessary for interaction with human BTRC and degradation of CD4.

Its subcellular location is the host membrane. Ion channel activity is inhibited by hexamethylene amiloride in vitro. Functionally, enhances virion budding by targeting host CD4 and Tetherin/BST2 to proteasome degradation. Degradation of CD4 prevents any unwanted premature interactions between viral Env and its host receptor CD4 in the endoplasmic reticulum. Degradation of antiretroviral protein Tetherin/BST2 is important for virion budding, as BST2 tethers new viral particles to the host cell membrane. Mechanistically, Vpu bridges either CD4 or BST2 to BTRC, a substrate recognition subunit of the Skp1/Cullin/F-box protein E3 ubiquitin ligase, induces their ubiquitination and subsequent proteasomal degradation. The alteration of the E3 ligase specificity by Vpu seems to promote the degradation of host IKBKB, leading to NF-kappa-B down-regulation and subsequent apoptosis. Acts as a viroporin that forms an oligomeric ion channel in membranes. Modulates the host DNA repair mechanisms to promote degradation of nuclear viral cDNA in cells that are already productively infected in order to suppress immune sensing and proviral hyper-integration (superinfection). Manipulates PML-NBs and modulates SUMOylation of host BLM protein thereby enhancing its DNA-end processing activity toward viral unintegrated linear DNA. Also inhibits RAD52-mediated homologous repair of viral cDNA, preventing the generation of dead-end circular forms of single copies of the long terminal repeat and permitting sustained nucleolytic attack. This Homo sapiens (Human) protein is Protein Vpu.